A 223-amino-acid chain; its full sequence is Adapter protein MecA (223 aa).

It belongs to the MecA family. In terms of assembly, homodimer.

Its function is as follows. Enables the recognition and targeting of unfolded and aggregated proteins to the ClpC protease or to other proteins involved in proteolysis. The polypeptide is Adapter protein MecA (Limosilactobacillus reuteri (strain DSM 20016) (Lactobacillus reuteri)).